A 290-amino-acid polypeptide reads, in one-letter code: Dual-specificity RNA pseudouridine synthase RluF (290 aa).

The region spanning Val7–Leu72 is the S4 RNA-binding domain. Interaction with RNA regions lie at residues Arg105 to Lys108 and Arg187 to Arg190. Catalysis depends on Asp107, which acts as the Nucleophile. A disordered region spans residues Val243–Arg290. Positions Val261 to Gly271 are enriched in basic and acidic residues.

Belongs to the pseudouridine synthase RsuA family. As to quaternary structure, monomer.

It catalyses the reaction uridine(2604) in 23S rRNA = pseudouridine(2604) in 23S rRNA. The enzyme catalyses uridine(35) in tRNA(Tyr) = pseudouridine(35) in tRNA(Tyr). Dual specificity enzyme that catalyzes the synthesis of pseudouridine from uracil-2604 in 23S ribosomal RNA and from uracil-35 in the anticodon of tRNA(Tyr). Can, to a small extent, also react with uracil-2605. This Escherichia coli (strain K12) protein is Dual-specificity RNA pseudouridine synthase RluF (rluF).